The following is a 619-amino-acid chain: Hypermethylated in cancer 2 protein (619 aa).

Residues 46 to 109 (CDVIIMVENS…IYTGKLLPSD (64 aa)) form the BTB domain. 3 positions are modified to phosphoserine: Ser166, Ser169, and Ser197. 2 disordered regions span residues 180 to 293 (DVRK…VGNS) and 307 to 426 (MDVE…GHTG). Residues 214–228 (LGLGGPAGGEMGLGG) show a composition bias toward gly residues. The binding to CtBP stretch occupies residues 247–249 (DLS). Polar residues predominate over residues 281 to 293 (APTSTSALPVGNS). Residues 337 to 357 (KKDWNKKEPVAGSPFDRRETG) are compositionally biased toward basic and acidic residues. Ser349 and Ser416 each carry phosphoserine. C2H2-type zinc fingers lie at residues 446–468 (YVCIPCAKGFPSSEQLNAHVETH), 509–531 (FKCSVCEKTYKDPATLRQHEKTH), 537–559 (FPCNICGKMFTQRGTMTRHMRSH), 565–587 (FACDECGMRFTRQYRLTEHMRVH), and 593–615 (YECQLCGGKFTQQRNLISHLRMH).

It belongs to the krueppel C2H2-type zinc-finger protein family. Hic subfamily. Self-associates. Interacts with HIC1.

It localises to the nucleus. Transcriptional repressor. The chain is Hypermethylated in cancer 2 protein (Hic2) from Mus musculus (Mouse).